Consider the following 152-residue polypeptide: Large ribosomal subunit protein uL13 (152 aa).

Residues 129-152 (EHPHEAQSPEVLDVKSMNKKNTRS) form a disordered region.

This sequence belongs to the universal ribosomal protein uL13 family. Part of the 50S ribosomal subunit.

Functionally, this protein is one of the early assembly proteins of the 50S ribosomal subunit, although it is not seen to bind rRNA by itself. It is important during the early stages of 50S assembly. The protein is Large ribosomal subunit protein uL13 of Ruegeria sp. (strain TM1040) (Silicibacter sp.).